We begin with the raw amino-acid sequence, 243 residues long: 1-(5-phosphoribosyl)-5-[(5-phosphoribosylamino)methylideneamino] imidazole-4-carboxamide isomerase (243 aa).

Asp8 (proton acceptor) is an active-site residue. Residue Asp129 is the Proton donor of the active site.

This sequence belongs to the HisA/HisF family.

It localises to the cytoplasm. It catalyses the reaction 1-(5-phospho-beta-D-ribosyl)-5-[(5-phospho-beta-D-ribosylamino)methylideneamino]imidazole-4-carboxamide = 5-[(5-phospho-1-deoxy-D-ribulos-1-ylimino)methylamino]-1-(5-phospho-beta-D-ribosyl)imidazole-4-carboxamide. It functions in the pathway amino-acid biosynthesis; L-histidine biosynthesis; L-histidine from 5-phospho-alpha-D-ribose 1-diphosphate: step 4/9. The protein is 1-(5-phosphoribosyl)-5-[(5-phosphoribosylamino)methylideneamino] imidazole-4-carboxamide isomerase of Brucella suis biovar 1 (strain 1330).